We begin with the raw amino-acid sequence, 273 residues long: MDPGPGANGMPLAGLAWSSASAPPPRGFSAISCTVEGTPASFGKTFAQKSGYFLCLNPLGSLENPQENVVVDIQILVDKSPLPPGFSPVCDPLDSKASVSKKKRMCVKLVPLGAADTAVFDIRLSGKTKTVPGYLRVGDMGGFAIWCRKAKAPRPVPKPRALSRDVRDLSLDSPGQPSKGGFPERTLSRLGSRASTLRRNDSIYEASNLYGISAMDGVPFTLHPRFEGKSCGPLAFSAFADLTIKSLADIEAEYNYGFVVEKTAAARLPPSVS.

Residues 9–151 (GMPLAGLAWS…GFAIWCRKAK (143 aa)) enclose the MABP domain. T130 is modified (phosphothreonine). The segment at 154–186 (RPVPKPRALSRDVRDLSLDSPGQPSKGGFPERT) is disordered. The SH3-binding signature appears at 155 to 160 (PVPKPR). Phosphoserine occurs at positions 163, 170, 195, and 202. An interaction with TSG101, VPS37B and VPS28 region spans residues 192 to 273 (SRASTLRRND…AAARLPPSVS (82 aa)). Residue Y204 is modified to Phosphotyrosine. At S207 the chain carries Phosphoserine. Residues 215–265 (MDGVPFTLHPRFEGKSCGPLAFSAFADLTIKSLADIEAEYNYGFVVEKTAA) enclose the UMA domain.

The protein belongs to the MVB12 family. In terms of assembly, component of the ESCRT-I complex (endosomal sorting complex required for transport I) which consists of TSG101, VPS28, a VPS37 protein (VPS37A to -D) and MVB12A or MVB12B in a 1:1:1:1 stoichiometry. Interacts with CD2AP and CIN85/SH3KBP1. Interacts with CD2AP (via one of the SH3 domains). Interacts with TSG101; the association appears to be mediated by the TSG101-VPS37 binary subcomplex. Interacts with VPS28. Interacts with VPS37B; the association appears to be mediated by the TSG101-VPS37 binary subcomplex. Interacts with VPS37C; the association appears to be mediated by the TSG101-VPS37 binary subcomplex. Interacts with VPS37D; the association appears to be mediated by the TSG101-VPS37 binary subcomplex. Interacts with CEP55. In terms of processing, phosphorylated on Tyr-204 upon EGF stimulation. Phosphorylation is required for interaction with CD2AP and CIN85/SH3KBP1.

It localises to the cytoplasm. It is found in the cytoskeleton. Its subcellular location is the nucleus. The protein resides in the endosome. The protein localises to the microtubule organizing center. It localises to the centrosome. It is found in the late endosome membrane. In terms of biological role, component of the ESCRT-I complex, a regulator of vesicular trafficking process. Required for the sorting of endocytic ubiquitinated cargos into multivesicular bodies. May be involved in the ligand-mediated internalization and down-regulation of EGF receptor. The protein is Multivesicular body subunit 12A (MVB12A) of Bos taurus (Bovine).